A 474-amino-acid chain; its full sequence is tRNA-2-methylthio-N(6)-dimethylallyladenosine synthase (474 aa).

The MTTase N-terminal domain maps to lysine 3–glycine 120. [4Fe-4S] cluster-binding residues include cysteine 12, cysteine 49, cysteine 83, cysteine 157, cysteine 161, and cysteine 164. Positions arginine 143–alanine 375 constitute a Radical SAM core domain. Residues arginine 378–arginine 441 enclose the TRAM domain.

This sequence belongs to the methylthiotransferase family. MiaB subfamily. In terms of assembly, monomer. Requires [4Fe-4S] cluster as cofactor.

It is found in the cytoplasm. The enzyme catalyses N(6)-dimethylallyladenosine(37) in tRNA + (sulfur carrier)-SH + AH2 + 2 S-adenosyl-L-methionine = 2-methylsulfanyl-N(6)-dimethylallyladenosine(37) in tRNA + (sulfur carrier)-H + 5'-deoxyadenosine + L-methionine + A + S-adenosyl-L-homocysteine + 2 H(+). Catalyzes the methylthiolation of N6-(dimethylallyl)adenosine (i(6)A), leading to the formation of 2-methylthio-N6-(dimethylallyl)adenosine (ms(2)i(6)A) at position 37 in tRNAs that read codons beginning with uridine. This chain is tRNA-2-methylthio-N(6)-dimethylallyladenosine synthase, found in Erwinia tasmaniensis (strain DSM 17950 / CFBP 7177 / CIP 109463 / NCPPB 4357 / Et1/99).